A 544-amino-acid polypeptide reads, in one-letter code: Chaperonin GroEL 3 (544 aa).

ATP-binding positions include 30–33 (TLGP), Lys51, 87–91 (DGTTT), Gly415, and Asp495.

It belongs to the chaperonin (HSP60) family. As to quaternary structure, forms a cylinder of 14 subunits composed of two heptameric rings stacked back-to-back. Interacts with the co-chaperonin GroES.

It is found in the cytoplasm. The enzyme catalyses ATP + H2O + a folded polypeptide = ADP + phosphate + an unfolded polypeptide.. Together with its co-chaperonin GroES, plays an essential role in assisting protein folding. The GroEL-GroES system forms a nano-cage that allows encapsulation of the non-native substrate proteins and provides a physical environment optimized to promote and accelerate protein folding. The protein is Chaperonin GroEL 3 of Psychromonas ingrahamii (strain DSM 17664 / CCUG 51855 / 37).